Reading from the N-terminus, the 463-residue chain is Nitrate/nitrite antiporter NarK (463 aa).

Residues 1–37 (MSHSSAPERATGAVITDWRPEDPAFWQQRGQRIASRN) are Cytoplasmic-facing. The helical transmembrane segment at 38 to 59 (LWISVPCLLLAFCVWMLFSAVA) threads the bilayer. Topologically, residues 60–73 (VNLPKVGFNFTTDQ) are periplasmic. The chain crosses the membrane as a helical span at residues 74-95 (LFMLTALPSVSGALLRVPYSFM). Arginine 89 provides a ligand contact to nitrate. Arginine 89 contributes to the nitrite binding site. Topologically, residues 96–102 (VPIFGGR) are cytoplasmic. The chain crosses the membrane as a helical span at residues 103–122 (RWTAFSTGILIIPCVWLGFA). Residues 123–130 (VQDTSTPY) lie on the Periplasmic side of the membrane. The helical transmembrane segment at 131–151 (SVFIIISLLCGFAGANFASSM) threads the bilayer. Over 152–166 (ANISFFFPKQKQGGA) the chain is Cytoplasmic. The chain crosses the membrane as a helical span at residues 167 to 189 (LGLNGGLGNMGVSVMQLVAPLVV). Asparagine 175 lines the nitrate pocket. Over 190–211 (SLSIFAVFGSQGVKQPDGTELY) the chain is Periplasmic. Residues 212-233 (LANASWIWVPFLAIFTIAAWFG) traverse the membrane as a helical segment. Topologically, residues 234 to 253 (MNDLATSKASIKEQLPVLKR) are cytoplasmic. The helical transmembrane segment at 254-281 (GHLWIMSLLYLATFGSFIGFSAGFAMLS) threads the bilayer. Tyrosine 263 lines the nitrate pocket. A nitrite-binding site is contributed by tyrosine 263. Over 282 to 289 (KTQFPDVQ) the chain is Periplasmic. The helical transmembrane segment at 290 to 312 (ILQYAFFGPFIGALARSAGGALS) threads the bilayer. The Cytoplasmic portion of the chain corresponds to 313–316 (DRLG). A helical membrane pass occupies residues 317–338 (GTRVTLVNFILMAIFSGLLFLT). Residues 339-347 (LPTDGQGGS) lie on the Periplasmic side of the membrane. A helical membrane pass occupies residues 348-373 (FMAFFAVFLALFLTAGLGSGSTFQMI). The Cytoplasmic segment spans residues 374 to 405 (SVIFRKLTMDRVKAEGGSDERAMREAATDTAA). A helical transmembrane segment spans residues 406 to 427 (ALGFISAIGAIGGFFIPKAFGS). Residue serine 411 participates in nitrate binding. Over 428 to 435 (SLALTGSP) the chain is Periplasmic. The helical transmembrane segment at 436–458 (VGAMKVFLIFYIACVVITWAVYG) threads the bilayer. The Cytoplasmic portion of the chain corresponds to 459–463 (RHSKK).

Belongs to the major facilitator superfamily. Nitrate/nitrite porter (TC 2.A.1.8) family.

Its subcellular location is the cell inner membrane. It carries out the reaction nitrate(in) + nitrite(out) = nitrate(out) + nitrite(in). Catalyzes nitrate uptake, nitrite uptake and nitrite export across the cytoplasmic membrane. Functions as a nitrate/nitrite exchanger, and protons are unlikely to be co-transported. This chain is Nitrate/nitrite antiporter NarK, found in Escherichia coli (strain K12).